Consider the following 637-residue polypeptide: 1-deoxy-D-xylulose-5-phosphate synthase (637 aa).

Residues His-76 and 117-119 (GHS) contribute to the thiamine diphosphate site. Asp-148 is a binding site for Mg(2+). Thiamine diphosphate contacts are provided by residues 149–150 (GA), Asn-177, Tyr-294, and Glu-381. Position 177 (Asn-177) interacts with Mg(2+).

It belongs to the transketolase family. DXPS subfamily. In terms of assembly, homodimer. Mg(2+) serves as cofactor. Thiamine diphosphate is required as a cofactor.

The catalysed reaction is D-glyceraldehyde 3-phosphate + pyruvate + H(+) = 1-deoxy-D-xylulose 5-phosphate + CO2. It functions in the pathway metabolic intermediate biosynthesis; 1-deoxy-D-xylulose 5-phosphate biosynthesis; 1-deoxy-D-xylulose 5-phosphate from D-glyceraldehyde 3-phosphate and pyruvate: step 1/1. Functionally, catalyzes the acyloin condensation reaction between C atoms 2 and 3 of pyruvate and glyceraldehyde 3-phosphate to yield 1-deoxy-D-xylulose-5-phosphate (DXP). In Neisseria gonorrhoeae (strain NCCP11945), this protein is 1-deoxy-D-xylulose-5-phosphate synthase.